Consider the following 535-residue polypeptide: uncharacterized protein (535 aa).

The next 6 helical transmembrane spans lie at 55 to 75 (LITI…IPII), 82 to 102 (FMPV…IMFV), 115 to 135 (IICF…ILRH), 143 to 163 (AFVL…LMLF), 201 to 221 (STIL…TLIM), and 346 to 366 (VSGP…NVFA).

The protein localises to the membrane. This is an uncharacterized protein from Schizosaccharomyces pombe (strain 972 / ATCC 24843) (Fission yeast).